The sequence spans 851 residues: Putative mediator of RNA polymerase II transcription subunit 15 (851 aa).

Disordered stretches follow at residues 79-212 (AQAG…NTVY) and 299-368 (QQQQ…NNTH). Positions 98-141 (ITPLIQQPITPVQQQVPPQKQPQPVYNQQQNQQQNQNQYTTTYP) are enriched in low complexity. Over residues 145–154 (TPQQSNTPPI) the composition is skewed to polar residues. Positions 155-212 (SNNNSNNNSNNNLNNNNNNNINNNNNNNNNNNNNNNNNNNNNNNNNNNNNNNNNNTVY) are enriched in low complexity. The stretch at 231 to 307 (QLYLQQQQQL…QQQQQQQHQQ (77 aa)) forms a coiled coil. Residues 308–319 (PVQMPSGVTTNK) show a composition bias toward polar residues. Over residues 320–358 (QSPQPQNTPLTPQQQQQLLAAQQSHAQAQANQNQQLQNP) the composition is skewed to low complexity. Residues 359–368 (KRISSTNNTH) show a composition bias toward polar residues. Positions 790 to 827 (LKDLESKMNKEFENSNDLNQLNNNINNNNNNNNSFSDN) form a coiled coil.

The protein belongs to the Mediator complex subunit 15 family. As to quaternary structure, component of the Mediator complex.

The protein localises to the cytoplasm. It localises to the nucleus. Its function is as follows. Component of the Mediator complex, a coactivator involved in the regulated transcription of nearly all RNA polymerase II-dependent genes. Mediator functions as a bridge to convey information from gene-specific regulatory proteins to the basal RNA polymerase II transcription machinery. Mediator is recruited to promoters by direct interactions with regulatory proteins and serves as a scaffold for the assembly of a functional preinitiation complex with RNA polymerase II and the general transcription factors. This Dictyostelium discoideum (Social amoeba) protein is Putative mediator of RNA polymerase II transcription subunit 15 (med15).